The sequence spans 956 residues: Translation initiation factor IF-2 (956 aa).

The disordered stretch occupies residues 68–357 (APEAAAPKAP…GVSVPRGDGN (290 aa)). Composition is skewed to low complexity over residues 86–123 (AKPA…APAV), 141–156 (PGNN…PRAG), 164–175 (PAAAPASGAGRP), and 212–235 (GPRP…RPAA). Gly residues-rich tracts occupy residues 236–257 (GSGG…GGGN) and 276–324 (RGAG…GAGR). Residues 325–334 (GKQRKSKRAK) show a composition bias toward basic residues. One can recognise a tr-type G domain in the interval 449–620 (ARPPVVTVMG…AVMLTADAAL (172 aa)). A G1 region spans residues 458 to 465 (GHVDHGKT). 458–465 (GHVDHGKT) lines the GTP pocket. The segment at 483–487 (GITQH) is G2. The interval 508 to 511 (DTPG) is G3. Residues 508-512 (DTPGH) and 562-565 (NKID) each bind GTP. The interval 562–565 (NKID) is G4. The tract at residues 598–600 (SAR) is G5.

The protein belongs to the TRAFAC class translation factor GTPase superfamily. Classic translation factor GTPase family. IF-2 subfamily.

It localises to the cytoplasm. One of the essential components for the initiation of protein synthesis. Protects formylmethionyl-tRNA from spontaneous hydrolysis and promotes its binding to the 30S ribosomal subunits. Also involved in the hydrolysis of GTP during the formation of the 70S ribosomal complex. The polypeptide is Translation initiation factor IF-2 (Renibacterium salmoninarum (strain ATCC 33209 / DSM 20767 / JCM 11484 / NBRC 15589 / NCIMB 2235)).